The chain runs to 518 residues: MIPDVSQALAWLEKHPQALKGIQRGLERETLRVNADGTLATTGHPEALGSALTHKWITTDFAEALLEFITPVDGDIEHMLTFMRDLHRYTARNMGDERMWPLSMPCYIAEGQDIELAQYGTSNTGRFKTLYREGLKNRYGALMQTISGVHYNFSLPMAFWQAKCGDIAGADAKEKISAGYFRVIRNYYRFGWVIPYLFGASPAICSSFLQGKPTSLPFEKTECGMYYLPYATSLRLSDLGYTNKSQSNLGITFNDLYEYVAGLKQAIKTPSEEYAKIGIEKDGKRLQINSNVLQIENELYAPIRPKRVTRSGESPSDALLRGGIEYIEVRSLDINPFSPIGVDEQQVRFLDLFMVWCALADAPEMSSSELACTRVNWNRVILEGRKPGLTLGIGCETAQFPLPQVGKDLFRDLKRVAQTLDSINGGEAYQKVCDELVACFDNPDLTFSARILRSMIDTGIGGTGKAFAEAYRNLLREEPLEILREEDFVAEREASERRQQEMEAADTEPFAVWLEKHA.

It belongs to the glutamate--cysteine ligase type 1 family. Type 1 subfamily.

The enzyme catalyses L-cysteine + L-glutamate + ATP = gamma-L-glutamyl-L-cysteine + ADP + phosphate + H(+). Its pathway is sulfur metabolism; glutathione biosynthesis; glutathione from L-cysteine and L-glutamate: step 1/2. This chain is Glutamate--cysteine ligase, found in Escherichia coli O7:K1 (strain IAI39 / ExPEC).